Here is a 261-residue protein sequence, read N- to C-terminus: Membrane protein insertase MisCA (261 aa).

The first 22 residues, 1 to 22, serve as a signal peptide directing secretion; that stretch reads MLLKRRIGLLLSMVGVFMLLAG. Cys23 carries the N-palmitoyl cysteine lipid modification. A lipid anchor (S-diacylglycerol cysteine) is attached at Cys23. The next 5 membrane-spanning stretches (helical) occupy residues 61–81, 131–151, 174–194, 204–224, and 225–245; these read YGLS…PLMI, LAGC…YHAI, YILP…MMAG, MMLW…PAAL, and SLYW…IKGP.

This sequence belongs to the OXA1/ALB3/YidC family. Type 2 subfamily. As to quaternary structure, mostly monomeric, it may also form dimers. Interacts with SpoIIIAE. Forms a complex with the F(1)F(0) ATP synthase in which can be found the alpha, beta, gamma, delta and epsilon subunits of F(1) and a, b and subunits of F(0). YqgA is found in the same complex.

Its subcellular location is the cell membrane. Functionally, required for the insertion and/or proper folding and/or complex formation of integral membrane proteins into the membrane. Involved in integration of membrane proteins that insert both dependently and independently of the Sec translocase complex, as well as at least some lipoproteins. Also involved in protein secretion processes. Essential for sporulation by activating sigma factor SpoIIIG/SigG after engulfment is completed in the prespore, maybe by acting on SpoIIIAE. It has an overlapping, although partly distinct, function compared to YqjG(MisCB). The protein is Membrane protein insertase MisCA (misCA) of Bacillus subtilis (strain 168).